The following is a 1709-amino-acid chain: Hybrid signal transduction histidine kinase L (1709 aa).

Disordered stretches follow at residues 52–192 (SNNN…SPPH), 206–276 (FFSG…NSSD), 413–535 (TSNS…NNSC), and 554–615 (QQQQ…IFNN). Low complexity predominate over residues 53–87 (NNNNNNNNNNNNNNNNNNNNNNNNNNNNNNNNNNN). Residues 88-100 (NEEKSNNETEKTL) are compositionally biased toward basic and acidic residues. Positions 106–148 (TTTTTTTNNNNNNNNNNNNNNNNNNNNNNNNNNNNNNNNNNTN) are enriched in low complexity. The span at 149-170 (SSNDIYMNSPSSTLSSPGNAGN) shows a compositional bias: polar residues. Composition is skewed to low complexity over residues 413–466 (TSNS…TPNS), 486–535 (NNSP…NNSC), and 554–576 (QQQQ…PTTS). A compositionally biased stretch (polar residues) spans 585 to 610 (LTINTSFKTSPMSSPKSFNKPSQSPQ). Residues 700–771 (ATRKMVTCIE…ATLTDKKTWN (72 aa)) enclose the PAS domain. Residues 770-822 (WNGFIRTRHNNNTLIYFEASISPVLDQFQQILYYNCTKRDVTQKRIDEESKTL) form the PAC domain. Residues 837-1059 (MMSHDIRTPM…TFTCILKFKK (223 aa)) enclose the Histidine kinase domain. The residue at position 840 (His-840) is a Phosphohistidine; by autocatalysis. 2 disordered regions span residues 1068-1112 (LLPA…HQQH) and 1137-1298 (QHQL…PTSP). Low complexity-rich tracts occupy residues 1075 to 1112 (LQQQ…HQQH), 1137 to 1153 (QHQL…LQQQ), and 1176 to 1194 (NQHI…QQQQ). A compositionally biased stretch (basic residues) spans 1204–1221 (HNSHGHNHHGSHHNHNHQ). Polar residues-rich tracts occupy residues 1244 to 1257 (NEQQ…NSFS) and 1275 to 1298 (NISQ…PTSP). 2 Response regulatory domains span residues 1312–1492 (KMLF…MMYL) and 1570–1692 (KVLV…KKYG). Asp-1366 bears the 4-aspartylphosphate mark. Low complexity-rich tracts occupy residues 1390 to 1412 (QHLQ…SELQ) and 1420 to 1440 (KNSS…SSGG). Positions 1390 to 1440 (QHLQQQQEQEQQQQQEQQQSELQKQPDVENKNSSQNNDNNNNNNKSNSSGG) are disordered. Residue Asp-1622 is modified to 4-aspartylphosphate.

Activation probably requires transfer of a phosphate group between a histidine in the kinase core (transmitter) domain and an aspartate of the receiver domain.

The enzyme catalyses ATP + protein L-histidine = ADP + protein N-phospho-L-histidine.. Its function is as follows. Acts as a receptor histidine kinase for a signal transduction pathway. This protein undergoes an ATP-dependent autophosphorylation at a conserved histidine residue in the kinase core, and a phosphoryl group is then transferred to a conserved aspartate residue in the receiver domain. The chain is Hybrid signal transduction histidine kinase L (dhkL) from Dictyostelium discoideum (Social amoeba).